Consider the following 4061-residue polypeptide: Hybrid PKS-NRPS synthetase tasS (4061 aa).

Residues 7 to 472 enclose the Ketosynthase family 3 (KS3) domain; it reads QEPIAVIGMA…GTNAHAIIEG (466 aa). Cys-180 is an active-site residue. Residues 586–911 form a malonyl-CoA:ACP transacylase (MAT) domain region; it reads VFTGQGAQWP…RQKNDVEELL (326 aa). Positions 977–1113 are N-terminal hotdog fold; it reads HPLLGRRCVE…ATVNVTFHEP (137 aa). The dehydratase (DH) domain stretch occupies residues 977–1280; that stretch reads HPLLGRRCVE…VRVQPFSVAG (304 aa). A PKS/mFAS DH domain is found at 977–1282; sequence HPLLGRRCVE…VQPFSVAGPQ (306 aa). His-1010 functions as the Proton acceptor; for dehydratase activity in the catalytic mechanism. The segment at 1128-1282 is C-terminal hotdog fold; it reads LANAEPQRLY…VQPFSVAGPQ (155 aa). Asp-1188 serves as the catalytic Proton donor; for dehydratase activity. Positions 1425–1619 are methyltransferase (MT) domain; sequence LDRFYEEGFE…GFNGVETHTP (195 aa). Residues 2153 to 2325 are ketoreductase (KR) domain; it reads TYFLLGLSGE…GVVGSDMAIG (173 aa). Positions 2437–2516 constitute a Carrier 1 domain; sequence EAIKVVFDTF…LLVEEAVDKL (80 aa). At Ser-2475 the chain carries O-(pantetheine 4'-phosphoryl)serine. The tract at residues 2527–2617 is disordered; the sequence is EHGGEPDLTQ…QKHQEQTSQS (91 aa). Over residues 2556–2576 the composition is skewed to low complexity; the sequence is TSAASSSDTGSDSSPTSNSVS. Polar residues predominate over residues 2577-2592; the sequence is ETQTGTPLETPMSTTE. A condensation (C) domain region spans residues 2632-3077; it reads QMTFGQNRFW…ELATWDTESE (446 aa). An adenylation (A) (KR) domain region spans residues 3103 to 3510; sequence QVIADHPDAV…RGYLTVEGRI (408 aa). Residues 3633-3712 form the Carrier 2 domain; that stretch reads QNLTATERTL…SMAALLDDGV (80 aa). Ser-3672 carries the post-translational modification O-(pantetheine 4'-phosphoryl)serine. Residues 3813 to 3969 form a reductase (RED) domain region; that stretch reads DIDVVLHCAA…LSPLEDAVEA (157 aa).

It in the C-terminal section; belongs to the NRP synthetase family.

The catalysed reaction is (2S,4S)-4-hydroxy-4-methylglutamate + 8 malonyl-CoA + 3 S-adenosyl-L-methionine + ATP + 8 NADPH + 11 H(+) = (2S)-3-[(2S)-3,5-dioxo-4-[(2E,4R,6R,8E,10E,12E)-4,6,12-trimethyltetradeca-2,8,10,12-tetraenoyl]pyrrolidin-2-yl]-2-hydroxy-2-methylpropanoate + AMP + 3 S-adenosyl-L-homocysteine + 8 CO2 + diphosphate + 8 NADP(+) + 8 CoA + 6 H2O. It functions in the pathway secondary metabolite biosynthesis. In terms of biological role, hybrid PKS-NRPS synthetase; part of the gene cluster that mediates the biosynthesis of the tetramic acids Sch210971 and Sch210972, potential anti-HIV fungal natural product that contain a decalin core. The PKS module of tasS together with the enoylreductase tasC catalyze the formation of the polyketide unit which is then conjugated to 4-hydroxyl-4-methyl glutamate (HMG) by the condensation domain of the tasS NRPS module. One unique structural feature of Sch210971 and Sch210972 is the tetramic acid motif proposed to be derived from the non-proteinogenic amino acid HMG, by a Dieckmann-type condensation catalyzed by the reductase domain of tasS. The aldolase tasA catalyzes the aldol condensation of 2 molecules of pyruvic acid to yield the intermediate 4-hydroxyl-4-methyl-2-oxoglutarate (HMOG), which can then be stereoselectively transaminated, may be by tasG, to form HMG. The Diels-Alderase tas3 then uses the Dieckmann product of tasS as substrate and catalyzes the Diels-Alder cycloaddition to form the decalin ring of Sch210971 and Sch210972. In Hapsidospora irregularis, this protein is Hybrid PKS-NRPS synthetase tasS.